A 249-amino-acid chain; its full sequence is Small ribosomal subunit protein eS6 (249 aa).

The span at 223 to 238 shows a compositional bias: basic residues; sequence LRQRDHSKKHTQKVHA. The disordered stretch occupies residues 223-249; sequence LRQRDHSKKHTQKVHAQRAEVAAFQKK.

The protein belongs to the eukaryotic ribosomal protein eS6 family. As to quaternary structure, component of the small ribosomal subunit. Part of the small subunit (SSU) processome, composed of more than 70 proteins and the RNA chaperone small nucleolar RNA (snoRNA) U3. Post-translationally, ribosomal protein S6 is the major substrate of protein kinases in eukaryote ribosomes.

It is found in the cytoplasm. It localises to the nucleus. The protein resides in the nucleolus. Its function is as follows. Component of the 40S small ribosomal subunit. Plays an important role in controlling cell growth and proliferation through the selective translation of particular classes of mRNA. Part of the small subunit (SSU) processome, first precursor of the small eukaryotic ribosomal subunit. During the assembly of the SSU processome in the nucleolus, many ribosome biogenesis factors, an RNA chaperone and ribosomal proteins associate with the nascent pre-rRNA and work in concert to generate RNA folding, modifications, rearrangements and cleavage as well as targeted degradation of pre-ribosomal RNA by the RNA exosome. The chain is Small ribosomal subunit protein eS6 (RPS6) from Leishmania infantum.